The primary structure comprises 381 residues: Guanine nucleotide-binding protein G(s) subunit alpha (381 aa).

C3 carries the S-palmitoyl cysteine lipid modification. The region spanning 36–381 (ALHRLLLLGA…RMHLQKYELL (346 aa)) is the G-alpha domain. The interval 39–52 (RLLLLGAGESGKST) is G1 motif. GTP-binding positions include 44–51 (GAGESGKS), 183–189 (LRCRVLT), 208–212 (GVGGQ), 277–280 (NKQD), and A353. Mg(2+)-binding residues include S51 and T189. The interval 181 to 189 (DILRCRVLT) is G2 motif. The interval 204–213 (FYMFGVGGQR) is G3 motif. A G4 motif region spans residues 273–280 (ILFLNKQD). Residues 351-356 (TTAVDT) are G5 motif.

The protein belongs to the G-alpha family. G(s) subfamily. As to quaternary structure, g proteins are composed of 3 units; alpha, beta and gamma. The alpha chain contains the guanine nucleotide binding site.

Functionally, guanine nucleotide-binding proteins (G proteins) are involved as modulators or transducers in various transmembrane signaling systems. The G(s) protein is involved in hormonal regulation of adenylate cyclase: it activates the cyclase in response to beta-adrenergic stimuli. In Geodia cydonium (Sponge), this protein is Guanine nucleotide-binding protein G(s) subunit alpha.